Reading from the N-terminus, the 595-residue chain is Proline--tRNA ligase (595 aa).

Positions 1 to 22 (MKMSTMFGATLHTAPGRSESEG) are disordered.

This sequence belongs to the class-II aminoacyl-tRNA synthetase family. ProS type 1 subfamily. Homodimer.

It localises to the cytoplasm. The enzyme catalyses tRNA(Pro) + L-proline + ATP = L-prolyl-tRNA(Pro) + AMP + diphosphate. In terms of biological role, catalyzes the attachment of proline to tRNA(Pro) in a two-step reaction: proline is first activated by ATP to form Pro-AMP and then transferred to the acceptor end of tRNA(Pro). As ProRS can inadvertently accommodate and process non-cognate amino acids such as alanine and cysteine, to avoid such errors it has two additional distinct editing activities against alanine. One activity is designated as 'pretransfer' editing and involves the tRNA(Pro)-independent hydrolysis of activated Ala-AMP. The other activity is designated 'posttransfer' editing and involves deacylation of mischarged Ala-tRNA(Pro). The misacylated Cys-tRNA(Pro) is not edited by ProRS. This Salinispora tropica (strain ATCC BAA-916 / DSM 44818 / JCM 13857 / NBRC 105044 / CNB-440) protein is Proline--tRNA ligase.